The primary structure comprises 468 residues: Ribulose bisphosphate carboxylase large chain (468 aa).

An N6,N6,N6-trimethyllysine modification is found at lysine 5. Asparagine 114 and threonine 164 together coordinate substrate. The active-site Proton acceptor is lysine 166. Residue lysine 168 participates in substrate binding. Mg(2+) is bound by residues lysine 192, aspartate 194, and glutamate 195. Lysine 192 bears the N6-carboxylysine mark. The active-site Proton acceptor is histidine 285. Substrate contacts are provided by arginine 286, histidine 318, and serine 370.

The protein belongs to the RuBisCO large chain family. Type I subfamily. Heterohexadecamer of 8 large chains and 8 small chains; disulfide-linked. The disulfide link is formed within the large subunit homodimers. Mg(2+) is required as a cofactor. Post-translationally, the disulfide bond which can form in the large chain dimeric partners within the hexadecamer appears to be associated with oxidative stress and protein turnover.

The protein localises to the plastid. It localises to the chloroplast. The catalysed reaction is 2 (2R)-3-phosphoglycerate + 2 H(+) = D-ribulose 1,5-bisphosphate + CO2 + H2O. It catalyses the reaction D-ribulose 1,5-bisphosphate + O2 = 2-phosphoglycolate + (2R)-3-phosphoglycerate + 2 H(+). RuBisCO catalyzes two reactions: the carboxylation of D-ribulose 1,5-bisphosphate, the primary event in carbon dioxide fixation, as well as the oxidative fragmentation of the pentose substrate in the photorespiration process. Both reactions occur simultaneously and in competition at the same active site. This Catesbaea spinosa protein is Ribulose bisphosphate carboxylase large chain.